A 302-amino-acid chain; its full sequence is Homoserine kinase (302 aa).

ATP is bound at residue 90 to 100 (KPGSGLGSSSA).

Belongs to the GHMP kinase family. Homoserine kinase subfamily.

Its subcellular location is the cytoplasm. The enzyme catalyses L-homoserine + ATP = O-phospho-L-homoserine + ADP + H(+). Its pathway is amino-acid biosynthesis; L-threonine biosynthesis; L-threonine from L-aspartate: step 4/5. In terms of biological role, catalyzes the ATP-dependent phosphorylation of L-homoserine to L-homoserine phosphate. The polypeptide is Homoserine kinase (Methanococcus vannielii (strain ATCC 35089 / DSM 1224 / JCM 13029 / OCM 148 / SB)).